Consider the following 310-residue polypeptide: N-acyl-aromatic-L-amino acid amidohydrolase (carboxylate-forming) (310 aa).

Residues H20 and E23 each contribute to the Zn(2+) site. Substrate is bound by residues R62 and N69 to R70. Residue H113 coordinates Zn(2+). Residues E176 and Y286 each coordinate substrate.

The protein belongs to the AspA/AstE family. Aspartoacylase subfamily. As to quaternary structure, homotetramer. Requires Zn(2+) as cofactor.

It is found in the apical cell membrane. Its subcellular location is the cytoplasm. The catalysed reaction is an N-acyl-aromatic L-alpha-amino acid + H2O = an aromatic L-alpha-amino acid + a carboxylate. It carries out the reaction an N-acetyl-L-cysteine-S-conjugate + H2O = an S-substituted L-cysteine + acetate. Functionally, plays an important role in deacetylating mercapturic acids in kidney proximal tubules. The protein is N-acyl-aromatic-L-amino acid amidohydrolase (carboxylate-forming) (acy3) of Xenopus tropicalis (Western clawed frog).